The following is a 299-amino-acid chain: Probable endonuclease 4 (299 aa).

His-68, His-110, Glu-145, Asp-179, His-182, His-214, Asp-227, His-229, and Glu-259 together coordinate Zn(2+).

The protein belongs to the AP endonuclease 2 family. Requires Zn(2+) as cofactor.

It catalyses the reaction Endonucleolytic cleavage to 5'-phosphooligonucleotide end-products.. Functionally, endonuclease IV plays a role in DNA repair. It cleaves phosphodiester bonds at apurinic or apyrimidinic (AP) sites, generating a 3'-hydroxyl group and a 5'-terminal sugar phosphate. The chain is Probable endonuclease 4 from Exiguobacterium sibiricum (strain DSM 17290 / CCUG 55495 / CIP 109462 / JCM 13490 / 255-15).